A 401-amino-acid polypeptide reads, in one-letter code: Multidrug resistance protein MdtA (401 aa).

An N-terminal signal peptide occupies residues 1–20 (MNQNNKHRTLLFRAALAAIA).

This sequence belongs to the membrane fusion protein (MFP) (TC 8.A.1) family. In terms of assembly, part of a tripartite efflux system composed of MdtA, MdtB and MdtC.

The protein localises to the cell inner membrane. The sequence is that of Multidrug resistance protein MdtA from Photorhabdus laumondii subsp. laumondii (strain DSM 15139 / CIP 105565 / TT01) (Photorhabdus luminescens subsp. laumondii).